Reading from the N-terminus, the 569-residue chain is Urease subunit alpha (569 aa).

Positions 131–569 (GGMDAHIHFI…LPMAQRYFLF (439 aa)) constitute a Urease domain. The Ni(2+) site is built by H136, H138, and K218. Position 218 is an N6-carboxylysine (K218). H220 provides a ligand contact to substrate. Positions 247 and 273 each coordinate Ni(2+). Catalysis depends on H321, which acts as the Proton donor. D361 lines the Ni(2+) pocket.

It belongs to the metallo-dependent hydrolases superfamily. Urease alpha subunit family. Heterotrimer of UreA (gamma), UreB (beta) and UreC (alpha) subunits. Three heterotrimers associate to form the active enzyme. It depends on Ni cation as a cofactor. Carboxylation allows a single lysine to coordinate two nickel ions.

It localises to the cytoplasm. It catalyses the reaction urea + 2 H2O + H(+) = hydrogencarbonate + 2 NH4(+). Its pathway is nitrogen metabolism; urea degradation; CO(2) and NH(3) from urea (urease route): step 1/1. The polypeptide is Urease subunit alpha (Rhizobium rhizogenes (strain K84 / ATCC BAA-868) (Agrobacterium radiobacter)).